A 501-amino-acid chain; its full sequence is Cytochrome P450 2J4 (501 aa).

The next 2 helical transmembrane spans lie at 12–32 and 77–97; these read IWAA…LLLA and NIFS…LPLI. C447 contacts heme.

This sequence belongs to the cytochrome P450 family. The cofactor is heme. In terms of tissue distribution, expressed in small intestinal enterocytes (at protein level). In the intestinal crypt, expressed at higher levels in the mature villous cells than in undifferentiated crypt cells (at protein level). Expressed in liver, kidney, lung, and olfactory mucosa (at protein level).

The protein resides in the endoplasmic reticulum membrane. It is found in the microsome membrane. The enzyme catalyses an organic molecule + reduced [NADPH--hemoprotein reductase] + O2 = an alcohol + oxidized [NADPH--hemoprotein reductase] + H2O + H(+). It catalyses the reaction (5Z,8Z,11Z,14Z)-eicosatetraenoate + reduced [NADPH--hemoprotein reductase] + O2 = 19-hydroxy-(5Z,8Z,11Z,14Z)-eicosatetraenoate + oxidized [NADPH--hemoprotein reductase] + H2O + H(+). It carries out the reaction all-trans-retinal + reduced [NADPH--hemoprotein reductase] + O2 = all-trans-retinoate + oxidized [NADPH--hemoprotein reductase] + H2O + 2 H(+). The catalysed reaction is 9-cis-retinal + reduced [NADPH--hemoprotein reductase] + O2 = 9-cis-retinoate + oxidized [NADPH--hemoprotein reductase] + H2O + 2 H(+). The protein operates within lipid metabolism; arachidonate metabolism. Its pathway is cofactor metabolism; retinol metabolism. In terms of biological role, a cytochrome P450 monooxygenase that may play a major role in intestinal retinoid metabolism. Catalyzes the oxidative transformation of all-trans retinal and 9-cis-retinal to the corresponding active forms all-trans and 9-cis retinoic acids. Catalyzes the hydroxylation of carbon-hydrogen bonds. Hydroxylates arachidonic acid predominantly at the omega-1 position. Mechanistically, uses molecular oxygen inserting one oxygen atom into a substrate, and reducing the second into a water molecule, with two electrons provided by NADPH via cytochrome P450 reductase (CPR; NADPH--hemoprotein reductase). The chain is Cytochrome P450 2J4 from Rattus norvegicus (Rat).